A 108-amino-acid chain; its full sequence is Thiosulfate sulfurtransferase GlpE (108 aa).

The Rhodanese domain occupies 17-105; sequence VSQSAILVDV…WLREFPQAIT (89 aa). Residue Cys65 is the Cysteine persulfide intermediate of the active site.

The protein belongs to the GlpE family.

It localises to the cytoplasm. The catalysed reaction is thiosulfate + hydrogen cyanide = thiocyanate + sulfite + 2 H(+). It catalyses the reaction thiosulfate + [thioredoxin]-dithiol = [thioredoxin]-disulfide + hydrogen sulfide + sulfite + 2 H(+). Functionally, transferase that catalyzes the transfer of sulfur from thiosulfate to thiophilic acceptors such as cyanide or dithiols. May function in a CysM-independent thiosulfate assimilation pathway by catalyzing the conversion of thiosulfate to sulfite, which can then be used for L-cysteine biosynthesis. The protein is Thiosulfate sulfurtransferase GlpE of Proteus mirabilis (strain HI4320).